Here is a 568-residue protein sequence, read N- to C-terminus: Proline--tRNA ligase (568 aa).

This sequence belongs to the class-II aminoacyl-tRNA synthetase family. ProS type 1 subfamily. In terms of assembly, homodimer.

It is found in the cytoplasm. The enzyme catalyses tRNA(Pro) + L-proline + ATP = L-prolyl-tRNA(Pro) + AMP + diphosphate. Catalyzes the attachment of proline to tRNA(Pro) in a two-step reaction: proline is first activated by ATP to form Pro-AMP and then transferred to the acceptor end of tRNA(Pro). As ProRS can inadvertently accommodate and process non-cognate amino acids such as alanine and cysteine, to avoid such errors it has two additional distinct editing activities against alanine. One activity is designated as 'pretransfer' editing and involves the tRNA(Pro)-independent hydrolysis of activated Ala-AMP. The other activity is designated 'posttransfer' editing and involves deacylation of mischarged Ala-tRNA(Pro). The misacylated Cys-tRNA(Pro) is not edited by ProRS. The chain is Proline--tRNA ligase from Lysinibacillus sphaericus (strain C3-41).